The following is a 568-amino-acid chain: Proline--tRNA ligase (568 aa).

Belongs to the class-II aminoacyl-tRNA synthetase family. ProS type 1 subfamily. In terms of assembly, homodimer.

The protein resides in the cytoplasm. It catalyses the reaction tRNA(Pro) + L-proline + ATP = L-prolyl-tRNA(Pro) + AMP + diphosphate. Catalyzes the attachment of proline to tRNA(Pro) in a two-step reaction: proline is first activated by ATP to form Pro-AMP and then transferred to the acceptor end of tRNA(Pro). As ProRS can inadvertently accommodate and process non-cognate amino acids such as alanine and cysteine, to avoid such errors it has two additional distinct editing activities against alanine. One activity is designated as 'pretransfer' editing and involves the tRNA(Pro)-independent hydrolysis of activated Ala-AMP. The other activity is designated 'posttransfer' editing and involves deacylation of mischarged Ala-tRNA(Pro). The misacylated Cys-tRNA(Pro) is not edited by ProRS. This chain is Proline--tRNA ligase, found in Listeria innocua serovar 6a (strain ATCC BAA-680 / CLIP 11262).